Consider the following 177-residue polypeptide: MGDASLSVLASSQVVAEGGNNFLVPNGTFFFVLAIFLIVLAVIGTFVVPPVMKVLRERDAMVAKTAADNRKAAEQFEAAQADYEEAMTEARVQASSLRDNARAEGRKVVEDARAKAEQEVLSTLQLAARQLKRERDAVELDLRANVASMSATLASRILGVDVAPAAATTSATKTSGR.

Residues 29–49 (FFFVLAIFLIVLAVIGTFVVP) form a helical membrane-spanning segment.

This sequence belongs to the ATPase B chain family. As to quaternary structure, F-type ATPases have 2 components, F(1) - the catalytic core - and F(0) - the membrane proton channel. F(1) has five subunits: alpha(3), beta(3), gamma(1), delta(1), epsilon(1). F(0) has three main subunits: a(1), b(2) and c(10-14). The alpha and beta chains form an alternating ring which encloses part of the gamma chain. F(1) is attached to F(0) by a central stalk formed by the gamma and epsilon chains, while a peripheral stalk is formed by the delta and b chains.

The protein localises to the cell membrane. In terms of biological role, f(1)F(0) ATP synthase produces ATP from ADP in the presence of a proton or sodium gradient. F-type ATPases consist of two structural domains, F(1) containing the extramembraneous catalytic core and F(0) containing the membrane proton channel, linked together by a central stalk and a peripheral stalk. During catalysis, ATP synthesis in the catalytic domain of F(1) is coupled via a rotary mechanism of the central stalk subunits to proton translocation. Functionally, component of the F(0) channel, it forms part of the peripheral stalk, linking F(1) to F(0). This Mycolicibacterium paratuberculosis (strain ATCC BAA-968 / K-10) (Mycobacterium paratuberculosis) protein is ATP synthase subunit b.